A 259-amino-acid polypeptide reads, in one-letter code: Expansin-B6 (259 aa).

Residues 1–24 form the signal peptide; sequence MASSSHRYFALLALFAVSLKFCYC. Asparagine 26 carries N-linked (GlcNAc...) asparagine glycosylation. Residues 52-160 form the Expansin-like EG45 domain; sequence GGACGFAVAN…IRVECLYRRT (109 aa). Intrachain disulfides connect cysteine 55–cysteine 82, cysteine 85–cysteine 155, and cysteine 90–cysteine 96. An Expansin-like CBD domain is found at 173-254; it reads YYISFVVEYE…NWKPNETYRS (82 aa). N-linked (GlcNAc...) asparagine glycosylation occurs at asparagine 249.

The protein belongs to the expansin family. Expansin B subfamily.

Its subcellular location is the secreted. It is found in the cell wall. The protein resides in the membrane. In terms of biological role, may cause loosening and extension of plant cell walls by disrupting non-covalent bonding between cellulose microfibrils and matrix glucans. The chain is Expansin-B6 from Arabidopsis thaliana (Mouse-ear cress).